We begin with the raw amino-acid sequence, 91 residues long: Ragulator complex protein LAMTOR5 homolog (91 aa).

The protein belongs to the LAMTOR5 family. Part of the Ragulator complex.

The protein resides in the cytoplasm. It localises to the lysosome. Functionally, regulator of the TOR pathway, a signaling cascade that promotes cell growth in response to growth factors, energy levels, and amino acids. As part of the Ragulator complex, may activate the TOR signaling cascade in response to amino acids. In Nematostella vectensis (Starlet sea anemone), this protein is Ragulator complex protein LAMTOR5 homolog.